A 105-amino-acid chain; its full sequence is Met repressor (105 aa).

This sequence belongs to the MetJ family. Homodimer.

The protein localises to the cytoplasm. Functionally, this regulatory protein, when combined with SAM (S-adenosylmethionine) represses the expression of the methionine regulon and of enzymes involved in SAM synthesis. This chain is Met repressor, found in Erwinia tasmaniensis (strain DSM 17950 / CFBP 7177 / CIP 109463 / NCPPB 4357 / Et1/99).